Reading from the N-terminus, the 373-residue chain is Glycerol-3-phosphate dehydrogenase [NAD(+)] 2 (373 aa).

Residue Ser-15 is modified to Phosphoserine. Residues 31-36 (GSGNWG), Phe-123, Lys-146, and Ala-179 contribute to the NAD(+) site. Position 146 (Lys-146) interacts with substrate. Catalysis depends on Lys-236, which acts as the Proton acceptor. Residues Arg-300 and Gln-329 each contribute to the NAD(+) site. 300–301 (RN) is a binding site for substrate.

This sequence belongs to the NAD-dependent glycerol-3-phosphate dehydrogenase family.

It is found in the cytoplasm. The enzyme catalyses sn-glycerol 3-phosphate + NAD(+) = dihydroxyacetone phosphate + NADH + H(+). The chain is Glycerol-3-phosphate dehydrogenase [NAD(+)] 2 (gpd2) from Schizosaccharomyces pombe (strain 972 / ATCC 24843) (Fission yeast).